The following is a 523-amino-acid chain: 2-isopropylmalate synthase (523 aa).

A Pyruvate carboxyltransferase domain is found at 12–274 (VVIFDTTLRD…WNKIDTTQLT (263 aa)). Residues D21, H209, H211, and N245 each coordinate Mn(2+). The interval 398 to 523 (KLLSLSVIAG…AQGAAAAAAS (126 aa)) is regulatory domain.

The protein belongs to the alpha-IPM synthase/homocitrate synthase family. LeuA type 1 subfamily. Homodimer. The cofactor is Mn(2+).

It is found in the cytoplasm. It carries out the reaction 3-methyl-2-oxobutanoate + acetyl-CoA + H2O = (2S)-2-isopropylmalate + CoA + H(+). It functions in the pathway amino-acid biosynthesis; L-leucine biosynthesis; L-leucine from 3-methyl-2-oxobutanoate: step 1/4. Catalyzes the condensation of the acetyl group of acetyl-CoA with 3-methyl-2-oxobutanoate (2-ketoisovalerate) to form 3-carboxy-3-hydroxy-4-methylpentanoate (2-isopropylmalate). This Bradyrhizobium sp. (strain BTAi1 / ATCC BAA-1182) protein is 2-isopropylmalate synthase.